The primary structure comprises 289 residues: Phosphatidylglycerol--prolipoprotein diacylglyceryl transferase (289 aa).

The next 3 membrane-spanning stretches (helical) occupy residues 24–44 (GIAI…VYLL), 70–90 (GGVL…DWFL), and 111–131 (GING…LWLF). Residue R158 coordinates a 1,2-diacyl-sn-glycero-3-phospho-(1'-sn-glycerol). A run of 2 helical transmembrane segments spans residues 219-239 (GYLS…IEFF) and 253-273 (FSMG…ILVW).

This sequence belongs to the Lgt family.

It is found in the cell inner membrane. It carries out the reaction L-cysteinyl-[prolipoprotein] + a 1,2-diacyl-sn-glycero-3-phospho-(1'-sn-glycerol) = an S-1,2-diacyl-sn-glyceryl-L-cysteinyl-[prolipoprotein] + sn-glycerol 1-phosphate + H(+). Its pathway is protein modification; lipoprotein biosynthesis (diacylglyceryl transfer). Catalyzes the transfer of the diacylglyceryl group from phosphatidylglycerol to the sulfhydryl group of the N-terminal cysteine of a prolipoprotein, the first step in the formation of mature lipoproteins. The polypeptide is Phosphatidylglycerol--prolipoprotein diacylglyceryl transferase (Chlorobaculum tepidum (strain ATCC 49652 / DSM 12025 / NBRC 103806 / TLS) (Chlorobium tepidum)).